The chain runs to 232 residues: UPF0758 protein Amet_2289 (232 aa).

Residues 110-232 (RIKSPDDVSN…YYSLKEKSMM (123 aa)) enclose the MPN domain. Zn(2+)-binding residues include His-181, His-183, and Asp-194. The JAMM motif signature appears at 181-194 (HNHPSGDPSPSGED).

It belongs to the UPF0758 family.

This is UPF0758 protein Amet_2289 from Alkaliphilus metalliredigens (strain QYMF).